We begin with the raw amino-acid sequence, 364 residues long: Alanine racemase (364 aa).

K35 (proton acceptor; specific for D-alanine) is an active-site residue. N6-(pyridoxal phosphate)lysine is present on K35. R131 provides a ligand contact to substrate. The Proton acceptor; specific for L-alanine role is filled by Y256. M304 serves as a coordination point for substrate.

This sequence belongs to the alanine racemase family. It depends on pyridoxal 5'-phosphate as a cofactor.

It catalyses the reaction L-alanine = D-alanine. The protein operates within amino-acid biosynthesis; D-alanine biosynthesis; D-alanine from L-alanine: step 1/1. In terms of biological role, catalyzes the interconversion of L-alanine and D-alanine. May also act on other amino acids. The polypeptide is Alanine racemase (alr) (Halorhodospira halophila (strain DSM 244 / SL1) (Ectothiorhodospira halophila (strain DSM 244 / SL1))).